We begin with the raw amino-acid sequence, 133 residues long: Small ribosomal subunit protein uS8 (133 aa).

It belongs to the universal ribosomal protein uS8 family. As to quaternary structure, part of the 30S ribosomal subunit. Contacts proteins S5 and S12.

In terms of biological role, one of the primary rRNA binding proteins, it binds directly to 16S rRNA central domain where it helps coordinate assembly of the platform of the 30S subunit. This Orientia tsutsugamushi (strain Ikeda) (Rickettsia tsutsugamushi) protein is Small ribosomal subunit protein uS8.